We begin with the raw amino-acid sequence, 229 residues long: Potassium/proton antiporter CemA (229 aa).

The next 2 membrane-spanning stretches (helical) occupy residues 114–134 and 189–209; these read IIYF…LIIL and IISG…KYWI.

Belongs to the CemA family.

Its subcellular location is the plastid. It localises to the chloroplast inner membrane. The enzyme catalyses K(+)(in) + H(+)(out) = K(+)(out) + H(+)(in). Its function is as follows. Contributes to K(+)/H(+) antiport activity by supporting proton efflux to control proton extrusion and homeostasis in chloroplasts in a light-dependent manner to modulate photosynthesis. Prevents excessive induction of non-photochemical quenching (NPQ) under continuous-light conditions. Indirectly promotes efficient inorganic carbon uptake into chloroplasts. The polypeptide is Potassium/proton antiporter CemA (Lotus japonicus (Lotus corniculatus var. japonicus)).